The chain runs to 126 residues: Spermidine export protein MdtJ (126 aa).

4 consecutive transmembrane segments (helical) span residues 1–21 (MIYW…TLSM), 30–50 (ITGH…LSLA), 54–74 (VALG…ITLF), and 81–101 (EPFS…IVML).

Belongs to the drug/metabolite transporter (DMT) superfamily. Small multidrug resistance (SMR) (TC 2.A.7.1) family. MdtJ subfamily. In terms of assembly, forms a complex with MdtI.

It is found in the cell inner membrane. Its function is as follows. Catalyzes the excretion of spermidine. This is Spermidine export protein MdtJ from Sodalis glossinidius (strain morsitans).